A 107-amino-acid polypeptide reads, in one-letter code: Large ribosomal subunit protein P2-A (107 aa).

The segment at 85–107 (GAAAPAAAAEEEEDDDMGFGLFD) is disordered.

It belongs to the eukaryotic ribosomal protein P1/P2 family. P1 and P2 exist as dimers at the large ribosomal subunit. Phosphorylated.

Plays an important role in the elongation step of protein synthesis. The sequence is that of Large ribosomal subunit protein P2-A from Trypanosoma cruzi.